Here is a 256-residue protein sequence, read N- to C-terminus: MPGLKITLLQQPLVWMDGPANLRHFDRQLEGITGRDVIVLPEMFTSGFAMEAAASSLAQDDVVNWMTAKAQQCNALIAGSVALQTESGSVNRFLLVEPGGTVHFYDKRHLFRMVDEHLHYKAGNARVIVEWRGWRILPLVCYDLRFPVWSRNLNDYDLALYVANWPAPRSLHWQALLTARAIENQAYVAGCNRVGSDGNGCHYRGDSRVINPQGEIIATADAHQATRIDAELSMAALREYREKFPAWQDADEFRLW.

Positions 4-234 (LKITLLQQPL…ATRIDAELSM (231 aa)) constitute a CN hydrolase domain. E42 functions as the Proton acceptor in the catalytic mechanism. K107 is an active-site residue. C141 (nucleophile) is an active-site residue.

Belongs to the carbon-nitrogen hydrolase superfamily. NIT1/NIT2 family.

The enzyme catalyses a monoamide of a dicarboxylate + H2O = a dicarboxylate + NH4(+). Its function is as follows. Hydrolyzes alpha-ketoglutaramate (a-KGM) to alpha-ketoglutarate (alpha-KG) and ammonia (specific activity 6.65 umol/min/mg), has weak activity on L-glutamine, almost no activity on deaminated glutathione (dGSH) and none on glutathione. May function as a metabolite repair enzyme. This Escherichia coli (strain B / BL21-DE3) protein is Omega-amidase YafV (yafV).